The chain runs to 389 residues: Chalcone synthase 1A (389 aa).

The active site involves cysteine 164.

Belongs to the thiolase-like superfamily. Chalcone/stilbene synthases family.

The catalysed reaction is (E)-4-coumaroyl-CoA + 3 malonyl-CoA + 3 H(+) = 2',4,4',6'-tetrahydroxychalcone + 3 CO2 + 4 CoA. The protein operates within secondary metabolite biosynthesis; flavonoid biosynthesis. Functionally, the primary product of this enzyme is 4,2',4',6'-tetrahydroxychalcone (also termed naringenin-chalcone or chalcone) which can under specific conditions spontaneously isomerize into naringenin. The protein is Chalcone synthase 1A (CHS-1A) of Pisum sativum (Garden pea).